We begin with the raw amino-acid sequence, 125 residues long: Small ribosomal subunit protein bS6 (125 aa).

The tract at residues 99–125 (ASPMVKAKDERRASAEVENNDFEDAEE) is disordered. Basic and acidic residues predominate over residues 104-113 (KAKDERRASA). Residues 116–125 (ENNDFEDAEE) are compositionally biased toward acidic residues.

This sequence belongs to the bacterial ribosomal protein bS6 family.

Its function is as follows. Binds together with bS18 to 16S ribosomal RNA. The chain is Small ribosomal subunit protein bS6 from Mannheimia succiniciproducens (strain KCTC 0769BP / MBEL55E).